A 173-amino-acid polypeptide reads, in one-letter code: Shikimate kinase (173 aa).

Residue 10–15 (GSGKTT) participates in ATP binding. A Mg(2+)-binding site is contributed by threonine 14. Residues aspartate 32, arginine 56, and glycine 78 each contribute to the substrate site. Arginine 117 contacts ATP. A substrate-binding site is contributed by arginine 135.

Belongs to the shikimate kinase family. As to quaternary structure, monomer. Mg(2+) is required as a cofactor.

Its subcellular location is the cytoplasm. It carries out the reaction shikimate + ATP = 3-phosphoshikimate + ADP + H(+). It participates in metabolic intermediate biosynthesis; chorismate biosynthesis; chorismate from D-erythrose 4-phosphate and phosphoenolpyruvate: step 5/7. Functionally, catalyzes the specific phosphorylation of the 3-hydroxyl group of shikimic acid using ATP as a cosubstrate. This chain is Shikimate kinase, found in Limosilactobacillus fermentum (strain NBRC 3956 / LMG 18251) (Lactobacillus fermentum).